We begin with the raw amino-acid sequence, 197 residues long: 22.7 kDa class IV heat shock protein (197 aa).

The N-terminal stretch at 1–28 (MSLKPLNMLLVPFLLLILAADFPLKAKA) is a signal peptide. A sHSP domain is found at 68-184 (PSITLSHARV…GPRMVSIVEE (117 aa)). The short motif at 194–197 (DELK) is the Prevents secretion from ER element.

Belongs to the small heat shock protein (HSP20) family. As to quaternary structure, forms oligomeric structures.

It is found in the endoplasmic reticulum lumen. In Pisum sativum (Garden pea), this protein is 22.7 kDa class IV heat shock protein (HSP22.7).